Here is a 191-residue protein sequence, read N- to C-terminus: Ankyrin repeat domain-containing protein 22 (191 aa).

ANK repeat units lie at residues 39–68 (NGDTPLICACRRGHVRIVSFLLRRNANVNL), 72–100 (KERTCLHYAVKKKFTFIDYLLIILLMPVL), 101–130 (LIGYFLMVSKTKQNEALVRMLLDAGVEVNA), and 134–163 (YGCTALHYACEMKNQSLIPLLLEARADPTI).

This is Ankyrin repeat domain-containing protein 22 (ANKRD22) from Homo sapiens (Human).